A 292-amino-acid chain; its full sequence is Bifunctional protein FolD (292 aa).

Residues 166-168 (GRS), Ser-191, and Ile-232 each bind NADP(+).

Belongs to the tetrahydrofolate dehydrogenase/cyclohydrolase family. In terms of assembly, homodimer.

The catalysed reaction is (6R)-5,10-methylene-5,6,7,8-tetrahydrofolate + NADP(+) = (6R)-5,10-methenyltetrahydrofolate + NADPH. It catalyses the reaction (6R)-5,10-methenyltetrahydrofolate + H2O = (6R)-10-formyltetrahydrofolate + H(+). It participates in one-carbon metabolism; tetrahydrofolate interconversion. Catalyzes the oxidation of 5,10-methylenetetrahydrofolate to 5,10-methenyltetrahydrofolate and then the hydrolysis of 5,10-methenyltetrahydrofolate to 10-formyltetrahydrofolate. This is Bifunctional protein FolD from Wolbachia sp. subsp. Drosophila simulans (strain wRi).